The chain runs to 135 residues: Endocuticle structural glycoprotein SgAbd-2 (135 aa).

A Pyrrolidone carboxylic acid modification is found at Gln-1. 2 O-linked (HexNAc...) threonine glycosylation sites follow: Thr-11 and Thr-100. Residues 32–102 form the Chitin-binding type R&amp;R domain; it reads DGSYAYSYQT…AEGAHLPTPP (71 aa).

Functionally, component of the abdominal endocuticle. This Schistocerca gregaria (Desert locust) protein is Endocuticle structural glycoprotein SgAbd-2.